The primary structure comprises 96 residues: Co-chaperonin GroES (96 aa).

This sequence belongs to the GroES chaperonin family. In terms of assembly, heptamer of 7 subunits arranged in a ring. Interacts with the chaperonin GroEL.

It is found in the cytoplasm. Its function is as follows. Together with the chaperonin GroEL, plays an essential role in assisting protein folding. The GroEL-GroES system forms a nano-cage that allows encapsulation of the non-native substrate proteins and provides a physical environment optimized to promote and accelerate protein folding. GroES binds to the apical surface of the GroEL ring, thereby capping the opening of the GroEL channel. The sequence is that of Co-chaperonin GroES from Buchnera aphidicola subsp. Acyrthosiphon pisum (strain 5A).